The sequence spans 448 residues: Putative sodium-coupled neutral amino acid transporter 11 (448 aa).

Residues 1–20 (MESERSCLLSSHDAGKGGSS) are disordered. 11 helical membrane passes run 22–42 (VSSASFNFINSIIGSGIIGLP), 52–72 (MGLLLLILVAFITDYSIILLV), 94–114 (IGYIIVSVLQFLYPFIAMISY), 143–163 (FVIAMSTVLFTLPLSLYRDIA), 165–185 (LGKVSLLSMILTFGILMTVVV), 200–220 (AWVFARWNAIQAVAVMSFALI), 246–266 (ISVGSSVLVSAVFAAAGYATF), 286–306 (TFGRFCYGVSIITTFPLECFV), 324–344 (SSHVIITLVIISATTAISLSY), 346–366 (CLGIVLELNGILSAVPLMFIF), and 389–409 (MILVAGVFVMIIGLIMMALFP). Residues N425, N440, and N444 are each glycosylated (N-linked (GlcNAc...) asparagine).

Belongs to the amino acid/polyamine transporter 2 family.

It is found in the membrane. Functionally, putative sodium-dependent amino acid/proton antiporter. The protein is Putative sodium-coupled neutral amino acid transporter 11 (slc38a11) of Danio rerio (Zebrafish).